Reading from the N-terminus, the 254-residue chain is Aspartate/glutamate leucyltransferase (254 aa).

This sequence belongs to the R-transferase family. Bpt subfamily.

It localises to the cytoplasm. It catalyses the reaction N-terminal L-glutamyl-[protein] + L-leucyl-tRNA(Leu) = N-terminal L-leucyl-L-glutamyl-[protein] + tRNA(Leu) + H(+). The enzyme catalyses N-terminal L-aspartyl-[protein] + L-leucyl-tRNA(Leu) = N-terminal L-leucyl-L-aspartyl-[protein] + tRNA(Leu) + H(+). Functions in the N-end rule pathway of protein degradation where it conjugates Leu from its aminoacyl-tRNA to the N-termini of proteins containing an N-terminal aspartate or glutamate. The polypeptide is Aspartate/glutamate leucyltransferase (Mesorhizobium japonicum (strain LMG 29417 / CECT 9101 / MAFF 303099) (Mesorhizobium loti (strain MAFF 303099))).